The chain runs to 571 residues: Urease subunit alpha (571 aa).

In terms of domain architecture, Urease spans 133 to 571; that stretch reads GGVDSHIHFI…LPLAQRYFLF (439 aa). Ni(2+) is bound by residues histidine 138, histidine 140, and lysine 221. Lysine 221 is subject to N6-carboxylysine. Histidine 223 serves as a coordination point for substrate. Ni(2+) is bound by residues histidine 250 and histidine 276. Residue histidine 324 is the Proton donor of the active site. Aspartate 364 serves as a coordination point for Ni(2+).

Belongs to the metallo-dependent hydrolases superfamily. Urease alpha subunit family. In terms of assembly, heterotrimer of UreA (gamma), UreB (beta) and UreC (alpha) subunits. Three heterotrimers associate to form the active enzyme. Ni cation serves as cofactor. Carboxylation allows a single lysine to coordinate two nickel ions.

Its subcellular location is the cytoplasm. It catalyses the reaction urea + 2 H2O + H(+) = hydrogencarbonate + 2 NH4(+). The protein operates within nitrogen metabolism; urea degradation; CO(2) and NH(3) from urea (urease route): step 1/1. The chain is Urease subunit alpha from Anaeromyxobacter sp. (strain Fw109-5).